We begin with the raw amino-acid sequence, 551 residues long: Gliomedin (551 aa).

Over 1 to 17 the chain is Cytoplasmic; that stretch reads MARGAEGGRGDAGWGLR. Residues 18-39 form a helical; Signal-anchor for type II membrane protein membrane-spanning segment; the sequence is GALAAVALLSALNAAGTVFALC. The Extracellular portion of the chain corresponds to 40–551; sequence QWRGLSSALR…VQFLSTTLNQ (512 aa). The tract at residues 72–107 is disordered; it reads LSRAPRGASAPPQDPASSARNKRSHSGEPAPHIRAE. Over residues 79 to 90 the composition is skewed to low complexity; that stretch reads ASAPPQDPASSA. Residue asparagine 130 is glycosylated (N-linked (GlcNAc...) asparagine). 2 consecutive Collagen-like domains span residues 137 to 195 and 196 to 222; these read LTGP…RGEK and GDHGELGLQGNEGPPGQKGEKGDKGDV. The interval 139–282 is disordered; that stretch reads GPSGPPGPPG…GETCAIPNDD (144 aa). Composition is skewed to basic and acidic residues over residues 191–200 and 213–222; these read ERGEKGDHGE and KGEKGDKGDV. Pro residues predominate over residues 237-253; it reads PPGPPGPPGPPGPPGPP. The Olfactomedin-like domain occupies 299–546; sequence QAESMITSIG…LMLYPVQFLS (248 aa). N-linked (GlcNAc...) asparagine glycans are attached at residues asparagine 329, asparagine 357, asparagine 378, and asparagine 464.

As to quaternary structure, homotrimer (via collagen-like domains). Interacts with NRCAM and NFASC/neurofascin. Interaction with glial NRCAM enhances interaction with axonal NFASC. Interacts with MYOC. In terms of processing, N-glycosylated. Proteolytic processing by a furin-like protease causes shedding of the ectodomain. Further cleavage by BMP1 releases the olfactomedin-like domain. In terms of tissue distribution, specifically expressed in spinal cord, brain, placenta and sciatic nerve. More abundant in peripheral than central nervous system.

The protein resides in the cell membrane. Its subcellular location is the cell projection. It is found in the axon. It localises to the secreted. The protein localises to the extracellular space. The protein resides in the extracellular matrix. Ligand for NRCAM and NFASC/neurofascin that plays a role in the formation and maintenance of the nodes of Ranvier on myelinated axons. Mediates interaction between Schwann cell microvilli and axons via its interactions with NRCAM and NFASC. Nodes of Ranvier contain clustered sodium channels that are crucial for the saltatory propagation of action potentials along myelinated axons. During development, nodes of Ranvier are formed by the fusion of two heminodes. Required for normal clustering of sodium channels at heminodes; not required for the formation of mature nodes with normal sodium channel clusters. Required, together with NRCAM, for maintaining NFASC and sodium channel clusters at mature nodes of Ranvier. The sequence is that of Gliomedin (GLDN) from Homo sapiens (Human).